Here is a 213-residue protein sequence, read N- to C-terminus: Lactobacillus shifted protein (213 aa).

Over residues proline 28–asparagine 38 the composition is skewed to polar residues. Disordered stretches follow at residues proline 28 to proline 56 and proline 182 to arginine 213.

The polypeptide is Lactobacillus shifted protein (lbsA) (Emericella nidulans (strain FGSC A4 / ATCC 38163 / CBS 112.46 / NRRL 194 / M139) (Aspergillus nidulans)).